Reading from the N-terminus, the 571-residue chain is Potassium-transporting ATPase potassium-binding subunit (571 aa).

11 consecutive transmembrane segments (helical) span residues 5-25 (GWIQIALYGAIVLALVKPLGS), 64-84 (LAYTGAVILFHVLGFAVLYAI), 136-156 (GLTHQNFLSAATGIAVAVALI), 179-199 (LYVLLPICVPYTLFLVWQGIP), 254-274 (LSNLVQMVSIFAIGAALTNVF), 285-305 (WAILGAMGILFLAGVLVTYWA), 330-350 (FGIAASALFAVITTAASCGAV), 357-376 (FTALGGLIPLLNMQLGEIII), 421-441 (MLGILCLPLMMLGFTALATVV), 488-508 (LAIGMLVGRFFVKIPVLAIAG), and 527-547 (GGLFVGLLVGVILIIGGLTFF).

Belongs to the KdpA family. The system is composed of three essential subunits: KdpA, KdpB and KdpC.

It is found in the cell inner membrane. Its function is as follows. Part of the high-affinity ATP-driven potassium transport (or Kdp) system, which catalyzes the hydrolysis of ATP coupled with the electrogenic transport of potassium into the cytoplasm. This subunit binds the periplasmic potassium ions and delivers the ions to the membrane domain of KdpB through an intramembrane tunnel. This Methylobacterium radiotolerans (strain ATCC 27329 / DSM 1819 / JCM 2831 / NBRC 15690 / NCIMB 10815 / 0-1) protein is Potassium-transporting ATPase potassium-binding subunit.